The following is a 239-amino-acid chain: Sugar fermentation stimulation protein homolog (239 aa).

This sequence belongs to the SfsA family.

This is Sugar fermentation stimulation protein homolog from Microcystis aeruginosa (strain NIES-843 / IAM M-2473).